We begin with the raw amino-acid sequence, 149 residues long: Large ribosomal subunit protein bL9 (149 aa).

This sequence belongs to the bacterial ribosomal protein bL9 family.

Functionally, binds to the 23S rRNA. The sequence is that of Large ribosomal subunit protein bL9 from Laribacter hongkongensis (strain HLHK9).